The primary structure comprises 145 residues: Protein SprT-like (145 aa).

In terms of domain architecture, SprT-like spans 4–140; it reads TNYVQEVSLA…VCGNCHGKLM (137 aa). Histidine 64 provides a ligand contact to Zn(2+). The active site involves glutamate 65. Histidine 68 provides a ligand contact to Zn(2+).

It belongs to the SprT family. Requires Zn(2+) as cofactor.

The protein resides in the cytoplasm. This Streptococcus pyogenes serotype M1 protein is Protein SprT-like.